The sequence spans 159 residues: Cytochrome c-type biogenesis protein CcmE (159 aa).

Over 1–8 (MNIRRKNR) the chain is Cytoplasmic. A helical; Signal-anchor for type II membrane protein membrane pass occupies residues 9–29 (LWIACAVLAGLALTITLVLYA). The Periplasmic segment spans residues 30 to 159 (LRSNIDLFYT…PESVYKDKAS (130 aa)). Heme contacts are provided by His130 and Tyr134. Residues 130-159 (HDENYTPPEVEKAMQENHRRPESVYKDKAS) form a disordered region.

It belongs to the CcmE/CycJ family.

Its subcellular location is the cell inner membrane. Functionally, heme chaperone required for the biogenesis of c-type cytochromes. Transiently binds heme delivered by CcmC and transfers the heme to apo-cytochromes in a process facilitated by CcmF and CcmH. The chain is Cytochrome c-type biogenesis protein CcmE from Citrobacter koseri (strain ATCC BAA-895 / CDC 4225-83 / SGSC4696).